Here is a 331-residue protein sequence, read N- to C-terminus: Phenylalanine--tRNA ligase alpha subunit (331 aa).

E254 is a Mg(2+) binding site.

Belongs to the class-II aminoacyl-tRNA synthetase family. Phe-tRNA synthetase alpha subunit type 1 subfamily. Tetramer of two alpha and two beta subunits. The cofactor is Mg(2+).

It localises to the cytoplasm. It catalyses the reaction tRNA(Phe) + L-phenylalanine + ATP = L-phenylalanyl-tRNA(Phe) + AMP + diphosphate + H(+). In Blochmanniella pennsylvanica (strain BPEN), this protein is Phenylalanine--tRNA ligase alpha subunit.